The primary structure comprises 510 residues: NAD(P)H-quinone oxidoreductase subunit 2 A, chloroplastic (510 aa).

Transmembrane regions (helical) follow at residues 31 to 51 (FIFP…IDLT), 59 to 79 (WFYF…LFRW), 99 to 119 (IFQF…VEYI), 124 to 144 (MAIT…MFLC), 149 to 169 (LITI…LSGY), 183 to 203 (YLLM…WLYG), 229 to 249 (ISIA…PAPF), 295 to 315 (WHLL…LLAI), 323 to 343 (MLAY…IVGD), 354 to 374 (YMLF…LFGL), 395 to 415 (ALSL…AGFF), and 418 to 438 (LYLF…IGLL).

This sequence belongs to the complex I subunit 2 family. In terms of assembly, NDH is composed of at least 16 different subunits, 5 of which are encoded in the nucleus.

The protein localises to the plastid. The protein resides in the chloroplast thylakoid membrane. It carries out the reaction a plastoquinone + NADH + (n+1) H(+)(in) = a plastoquinol + NAD(+) + n H(+)(out). The catalysed reaction is a plastoquinone + NADPH + (n+1) H(+)(in) = a plastoquinol + NADP(+) + n H(+)(out). NDH shuttles electrons from NAD(P)H:plastoquinone, via FMN and iron-sulfur (Fe-S) centers, to quinones in the photosynthetic chain and possibly in a chloroplast respiratory chain. The immediate electron acceptor for the enzyme in this species is believed to be plastoquinone. Couples the redox reaction to proton translocation, and thus conserves the redox energy in a proton gradient. This is NAD(P)H-quinone oxidoreductase subunit 2 A, chloroplastic from Oryza nivara (Indian wild rice).